Reading from the N-terminus, the 373-residue chain is Peptide chain release factor 2 (373 aa).

Glutamine 251 carries the N5-methylglutamine modification.

The protein belongs to the prokaryotic/mitochondrial release factor family. In terms of processing, methylated by PrmC. Methylation increases the termination efficiency of RF2.

The protein localises to the cytoplasm. Peptide chain release factor 2 directs the termination of translation in response to the peptide chain termination codons UGA and UAA. This chain is Peptide chain release factor 2, found in Salinispora tropica (strain ATCC BAA-916 / DSM 44818 / JCM 13857 / NBRC 105044 / CNB-440).